Here is a 439-residue protein sequence, read N- to C-terminus: Lipoyl synthase, mitochondrial (439 aa).

Residues 1–37 (MVASARGLRTLHSAHSSISALPASTVPRLQLAVSRCY) constitute a mitochondrion transit peptide. Residues Cys-150, Cys-155, Cys-161, Cys-181, Cys-185, Cys-188, and Ser-396 each contribute to the [4Fe-4S] cluster site. A Radical SAM core domain is found at 164 to 385 (GSSKSAATAT…KERALEMGFL (222 aa)).

Belongs to the radical SAM superfamily. Lipoyl synthase family. It depends on [4Fe-4S] cluster as a cofactor.

Its subcellular location is the mitochondrion. The enzyme catalyses [[Fe-S] cluster scaffold protein carrying a second [4Fe-4S](2+) cluster] + N(6)-octanoyl-L-lysyl-[protein] + 2 oxidized [2Fe-2S]-[ferredoxin] + 2 S-adenosyl-L-methionine + 4 H(+) = [[Fe-S] cluster scaffold protein] + N(6)-[(R)-dihydrolipoyl]-L-lysyl-[protein] + 4 Fe(3+) + 2 hydrogen sulfide + 2 5'-deoxyadenosine + 2 L-methionine + 2 reduced [2Fe-2S]-[ferredoxin]. The protein operates within protein modification; protein lipoylation via endogenous pathway; protein N(6)-(lipoyl)lysine from octanoyl-[acyl-carrier-protein]: step 2/2. Its function is as follows. Catalyzes the radical-mediated insertion of two sulfur atoms into the C-6 and C-8 positions of the octanoyl moiety bound to the lipoyl domains of lipoate-dependent enzymes, thereby converting the octanoylated domains into lipoylated derivatives. The polypeptide is Lipoyl synthase, mitochondrial (Paracoccidioides lutzii (strain ATCC MYA-826 / Pb01) (Paracoccidioides brasiliensis)).